Reading from the N-terminus, the 133-residue chain is U-scoloptoxin(05)-Sa1a (133 aa).

The N-terminal stretch at 1 to 24 (MPSLCIIALFGTLTFYTLIPSIHT) is a signal peptide.

Belongs to the scoloptoxin-05 family. Post-translationally, contains 5 disulfide bonds. Expressed by the venom gland.

It is found in the secreted. This chain is U-scoloptoxin(05)-Sa1a, found in Scolopendra alternans (Florida Keys giant centipede).